A 317-amino-acid polypeptide reads, in one-letter code: Bile salt hydrolase/transferase (317 aa).

The Nucleophile; acyl-thioester intermediate role is filled by C2. The deoxycholate site is built by C2 and R18. N82 contacts taurine.

The protein belongs to the peptidase C59 family. As to quaternary structure, homotetramer. The tetramer consists of a dimer of dimers.

The catalysed reaction is glycocholate + H2O = cholate + glycine. It carries out the reaction glycodeoxycholate + H2O = deoxycholate + glycine. It catalyses the reaction chenodeoxycholate + glycine = glycochenodeoxycholate + H2O. The enzyme catalyses cholate + taurine = taurocholate + H2O. The catalysed reaction is taurodeoxycholate + H2O = deoxycholate + taurine. It carries out the reaction taurochenodeoxycholate + H2O = chenodeoxycholate + taurine. It catalyses the reaction an L-alpha-amino acid + cholate = an N-choloyl-L-alpha-amino acid + H2O. The enzyme catalyses an L-alpha-amino acid + taurocholate = an N-choloyl-L-alpha-amino acid + taurine. The catalysed reaction is cholate + L-alanine = L-alanocholate + H2O. It carries out the reaction taurocholate + L-alanine = L-alanocholate + taurine. It catalyses the reaction cholate + L-serine = L-serocholate + H2O. The enzyme catalyses taurocholate + L-serine = L-serocholate + taurine. The catalysed reaction is cholate + L-histidine = L-histidocholate + H2O. It carries out the reaction taurocholate + L-histidine = L-histidocholate + taurine. It functions in the pathway lipid metabolism; bile acid biosynthesis. Hydrolase activity is competitively inhibited by the products cholate (CA) and deoxycholate (DCA), and by phenylacetate and 4-aminophenylacetate. Penicillin V and penicillin G show mixed inhibition. Strongly inhibited by thiol enzyme inhibitors in vitro. Functionally, possesses dual functions in bile acid metabolism. Acts as a bile salt hydrolase that catalyzes the deconjugation of glycine- and taurine-linked bile salts, which occurs naturally in the intestines of humans, releasing amino acid residues and deconjugated bile salts (bile acids). Can hydrolyze the amide bond in all six major human conjugated bile salts, namely glycocholate (GCA), glycodeoxycholate (GDCA), glycochenodeoxycholate (GCDCA), taurocholate (TCA), taurodeoxycholate (TDCA) and taurochenodeoxycholate (TCDCA). Shows a slight preference for glycine-conjugated bile acids as substrates. Also acts as an amine N-acyltransferase that conjugates a wide variety of amino acids to conjugated and non-conjugated bile acids, thus producing bacterial bile acid amidates (BBAAs) - also named microbially conjugated bile acids (MCBAs) - in the gastrointestinal tract. These BBAAs may facilitate communication between the microbiota and host through the activation of human ligand-activated transcription factors. Is totally inactive toward penicillin V. In Bifidobacterium longum, this protein is Bile salt hydrolase/transferase.